The primary structure comprises 24 residues: Allergen Lip b 1 (24 aa).

The polypeptide is Allergen Lip b 1 (Liposcelis bostrychophila (Booklouse)).